The sequence spans 321 residues: Queuosine 5'-phosphate N-glycosylase/hydrolase (321 aa).

Queuine-binding residues include Phe-227, Asp-229, and Asp-296. Catalysis depends on Asp-229, which acts as the Nucleophile or transition state stabilizer.

Belongs to the QNG1 protein family.

It carries out the reaction queuosine 5'-phosphate + H2O = queuine + D-ribose 5-phosphate. Catalyzes the hydrolysis of queuosine 5'-phosphate, releasing the nucleobase queuine (q). Is required for salvage of queuine from exogenous queuosine (Q) that is imported and then converted to queuosine 5'-phosphate intracellularly. The sequence is that of Queuosine 5'-phosphate N-glycosylase/hydrolase from Dictyostelium discoideum (Social amoeba).